The sequence spans 188 residues: MSDTILGFNKSNVVLAAGIAGAAFLGYCIYFDHKRINAPDYKDKIRQKRRAQAGAGGMAPRRPAAAGNDAAPDVTDPSQMQRFFLQEVQLGEELMAAGNVDEGAVHIANAVMLCGESQQLLSIFQQTLSEDQFRAVVQQLPSTRERLAEMFGAKADEAENEPPMVQYLGDGPPPAQIQELIDDTDDLE.

The Mitochondrial intermembrane portion of the chain corresponds to 1-12 (MSDTILGFNKSN). The chain crosses the membrane as a helical span at residues 13–31 (VVLAAGIAGAAFLGYCIYF). Residues 32-188 (DHKRINAPDY…ELIDDTDDLE (157 aa)) lie on the Cytoplasmic side of the membrane. 2 disordered regions span residues 42 to 73 (KDKI…AAPD) and 156 to 188 (DEAE…DDLE). Residues 58–67 (MAPRRPAAAG) are compositionally biased toward low complexity.

This sequence belongs to the Tom20 family. In terms of assembly, forms part of the preprotein translocase complex of the outer mitochondrial membrane (TOM complex).

It localises to the mitochondrion outer membrane. Its function is as follows. Central component of the receptor complex responsible for the recognition and translocation of cytosolically synthesized mitochondrial preproteins. Together with tomm-22 functions as the transit peptide receptor at the surface of the mitochondrion outer membrane and facilitates the movement of preproteins into the translocation pore. The protein is Mitochondrial import receptor subunit TOM20 homolog of Caenorhabditis elegans.